A 465-amino-acid polypeptide reads, in one-letter code: Ribulose bisphosphate carboxylase large chain (465 aa).

Lysine 4 bears the N6,N6,N6-trimethyllysine mark. 2 residues coordinate substrate: asparagine 113 and threonine 163. The active-site Proton acceptor is lysine 165. Residue lysine 167 participates in substrate binding. Mg(2+) is bound by residues lysine 191, aspartate 193, and glutamate 194. Lysine 191 is modified (N6-carboxylysine). Histidine 284 serves as the catalytic Proton acceptor. 3 residues coordinate substrate: arginine 285, histidine 317, and serine 369.

The protein belongs to the RuBisCO large chain family. Type I subfamily. Heterohexadecamer of 8 large chains and 8 small chains; disulfide-linked. The disulfide link is formed within the large subunit homodimers. Requires Mg(2+) as cofactor. Post-translationally, the disulfide bond which can form in the large chain dimeric partners within the hexadecamer appears to be associated with oxidative stress and protein turnover.

The protein resides in the plastid. Its subcellular location is the chloroplast. It catalyses the reaction 2 (2R)-3-phosphoglycerate + 2 H(+) = D-ribulose 1,5-bisphosphate + CO2 + H2O. The catalysed reaction is D-ribulose 1,5-bisphosphate + O2 = 2-phosphoglycolate + (2R)-3-phosphoglycerate + 2 H(+). In terms of biological role, ruBisCO catalyzes two reactions: the carboxylation of D-ribulose 1,5-bisphosphate, the primary event in carbon dioxide fixation, as well as the oxidative fragmentation of the pentose substrate in the photorespiration process. Both reactions occur simultaneously and in competition at the same active site. The protein is Ribulose bisphosphate carboxylase large chain of Platytheca verticillata.